A 266-amino-acid chain; its full sequence is MTITNYINNQFTFLDMAEPWQLGFQDPATPVMEGIINFHHDLMFFLISIVVFVCWMLFRVITLFDEKKNKIPATVVHGATIEIIWTSIPALILLTVAVPSFALLYSMDEVIDPIITLKVIGSQWYWSYEYSDNLEFSDEPLIFDSYMIQEDDLAIGQFRILEVDNRVVVPTNSHIRVLITASDVLHSWAIPSLGIKLDACPGRLNQTSMFIKREGVFYGQCSEICGVNHGFMPIVVEAVSLEDYLTWLKNKINFDFNVXLIKFYGI.

The Mitochondrial intermembrane portion of the chain corresponds to 1-43 (MTITNYINNQFTFLDMAEPWQLGFQDPATPVMEGIINFHHDLM). The helical transmembrane segment at 44–64 (FFLISIVVFVCWMLFRVITLF) threads the bilayer. Residues 65–82 (DEKKNKIPATVVHGATIE) are Mitochondrial matrix-facing. Residues 83-103 (IIWTSIPALILLTVAVPSFAL) traverse the membrane as a helical segment. Residues 104–266 (LYSMDEVIDP…NVXLIKFYGI (163 aa)) lie on the Mitochondrial intermembrane side of the membrane. Cu cation is bound by residues His186, Cys221, Glu223, Cys225, His229, and Met232. Residue Glu223 coordinates Mg(2+).

This sequence belongs to the cytochrome c oxidase subunit 2 family. As to quaternary structure, component of the cytochrome c oxidase (complex IV, CIV), a multisubunit enzyme composed of a catalytic core of 3 subunits and several supernumerary subunits. The complex exists as a monomer or a dimer and forms supercomplexes (SCs) in the inner mitochondrial membrane with ubiquinol-cytochrome c oxidoreductase (cytochrome b-c1 complex, complex III, CIII). Requires Cu cation as cofactor.

It localises to the mitochondrion inner membrane. It carries out the reaction 4 Fe(II)-[cytochrome c] + O2 + 8 H(+)(in) = 4 Fe(III)-[cytochrome c] + 2 H2O + 4 H(+)(out). In terms of biological role, component of the cytochrome c oxidase, the last enzyme in the mitochondrial electron transport chain which drives oxidative phosphorylation. The respiratory chain contains 3 multisubunit complexes succinate dehydrogenase (complex II, CII), ubiquinol-cytochrome c oxidoreductase (cytochrome b-c1 complex, complex III, CIII) and cytochrome c oxidase (complex IV, CIV), that cooperate to transfer electrons derived from NADH and succinate to molecular oxygen, creating an electrochemical gradient over the inner membrane that drives transmembrane transport and the ATP synthase. Cytochrome c oxidase is the component of the respiratory chain that catalyzes the reduction of oxygen to water. Electrons originating from reduced cytochrome c in the intermembrane space (IMS) are transferred via the dinuclear copper A center (CU(A)) of subunit 2 and heme A of subunit 1 to the active site in subunit 1, a binuclear center (BNC) formed by heme A3 and copper B (CU(B)). The BNC reduces molecular oxygen to 2 water molecules using 4 electrons from cytochrome c in the IMS and 4 protons from the mitochondrial matrix. The protein is Cytochrome c oxidase subunit 2 (COX2) of Phytophthora megasperma (Potato pink rot fungus).